Consider the following 254-residue polypeptide: Imidazole glycerol phosphate synthase subunit HisF (254 aa).

Catalysis depends on residues D11 and D130.

The protein belongs to the HisA/HisF family. Heterodimer of HisH and HisF.

It is found in the cytoplasm. It catalyses the reaction 5-[(5-phospho-1-deoxy-D-ribulos-1-ylimino)methylamino]-1-(5-phospho-beta-D-ribosyl)imidazole-4-carboxamide + L-glutamine = D-erythro-1-(imidazol-4-yl)glycerol 3-phosphate + 5-amino-1-(5-phospho-beta-D-ribosyl)imidazole-4-carboxamide + L-glutamate + H(+). The protein operates within amino-acid biosynthesis; L-histidine biosynthesis; L-histidine from 5-phospho-alpha-D-ribose 1-diphosphate: step 5/9. IGPS catalyzes the conversion of PRFAR and glutamine to IGP, AICAR and glutamate. The HisF subunit catalyzes the cyclization activity that produces IGP and AICAR from PRFAR using the ammonia provided by the HisH subunit. The polypeptide is Imidazole glycerol phosphate synthase subunit HisF (Solibacter usitatus (strain Ellin6076)).